We begin with the raw amino-acid sequence, 262 residues long: Small ribosomal subunit protein eS4 (262 aa).

The S4 RNA-binding domain maps to 42-105 (LPLIIMLRNR…GEFFRLLYDV (64 aa)).

The protein belongs to the eukaryotic ribosomal protein eS4 family.

The protein is Small ribosomal subunit protein eS4 (RpS4) of Ixodes scapularis (Black-legged tick).